The chain runs to 461 residues: tRNA modification GTPase MnmE (461 aa).

Positions 23, 88, and 127 each coordinate (6S)-5-formyl-5,6,7,8-tetrahydrofolate. The TrmE-type G domain maps to 223 to 382; sequence GLSTVIVGKP…IEDALAEMVY (160 aa). Asn-233 is a binding site for K(+). GTP-binding positions include 233–238, 252–258, and 277–280; these read NVGKSS, TDVPGTT, and DTAG. Ser-237 is a binding site for Mg(2+). Thr-252, Val-254, and Thr-257 together coordinate K(+). Thr-258 serves as a coordination point for Mg(2+). Residue Lys-461 coordinates (6S)-5-formyl-5,6,7,8-tetrahydrofolate.

It belongs to the TRAFAC class TrmE-Era-EngA-EngB-Septin-like GTPase superfamily. TrmE GTPase family. Homodimer. Heterotetramer of two MnmE and two MnmG subunits. Requires K(+) as cofactor.

It is found in the cytoplasm. Exhibits a very high intrinsic GTPase hydrolysis rate. Involved in the addition of a carboxymethylaminomethyl (cmnm) group at the wobble position (U34) of certain tRNAs, forming tRNA-cmnm(5)s(2)U34. The sequence is that of tRNA modification GTPase MnmE from Alkaliphilus oremlandii (strain OhILAs) (Clostridium oremlandii (strain OhILAs)).